The primary structure comprises 138 residues: Large ribosomal subunit protein mL54 (138 aa).

Residues 1 to 16 (MAARRLFGATGSWARW) constitute a mitochondrion transit peptide.

Belongs to the mitochondrion-specific ribosomal protein mL54 family. In terms of assembly, component of the mitochondrial ribosome large subunit (39S) which comprises a 16S rRNA and about 50 distinct proteins.

The protein localises to the mitochondrion. The polypeptide is Large ribosomal subunit protein mL54 (MRPL54) (Bos taurus (Bovine)).